A 190-amino-acid polypeptide reads, in one-letter code: Hypoxanthine/guanine phosphoribosyltransferase (190 aa).

Belongs to the purine/pyrimidine phosphoribosyltransferase family. Archaeal HPRT subfamily. Homodimer.

The protein localises to the cytoplasm. It catalyses the reaction IMP + diphosphate = hypoxanthine + 5-phospho-alpha-D-ribose 1-diphosphate. It carries out the reaction GMP + diphosphate = guanine + 5-phospho-alpha-D-ribose 1-diphosphate. It participates in purine metabolism; IMP biosynthesis via salvage pathway; IMP from hypoxanthine: step 1/1. Catalyzes a salvage reaction resulting in the formation of IMP that is energically less costly than de novo synthesis. The chain is Hypoxanthine/guanine phosphoribosyltransferase from Methanobacterium lacus (strain AL-21).